The primary structure comprises 321 residues: Lipoyl synthase (321 aa).

Residues C68, C73, C79, C94, C98, C101, and S308 each contribute to the [4Fe-4S] cluster site. One can recognise a Radical SAM core domain in the interval 80–297 (FNHGTATFMI…KAEAMAMGFT (218 aa)).

Belongs to the radical SAM superfamily. Lipoyl synthase family. [4Fe-4S] cluster serves as cofactor.

It localises to the cytoplasm. The catalysed reaction is [[Fe-S] cluster scaffold protein carrying a second [4Fe-4S](2+) cluster] + N(6)-octanoyl-L-lysyl-[protein] + 2 oxidized [2Fe-2S]-[ferredoxin] + 2 S-adenosyl-L-methionine + 4 H(+) = [[Fe-S] cluster scaffold protein] + N(6)-[(R)-dihydrolipoyl]-L-lysyl-[protein] + 4 Fe(3+) + 2 hydrogen sulfide + 2 5'-deoxyadenosine + 2 L-methionine + 2 reduced [2Fe-2S]-[ferredoxin]. It participates in protein modification; protein lipoylation via endogenous pathway; protein N(6)-(lipoyl)lysine from octanoyl-[acyl-carrier-protein]: step 2/2. In terms of biological role, catalyzes the radical-mediated insertion of two sulfur atoms into the C-6 and C-8 positions of the octanoyl moiety bound to the lipoyl domains of lipoate-dependent enzymes, thereby converting the octanoylated domains into lipoylated derivatives. The protein is Lipoyl synthase of Pectobacterium atrosepticum (strain SCRI 1043 / ATCC BAA-672) (Erwinia carotovora subsp. atroseptica).